Here is a 108-residue protein sequence, read N- to C-terminus: Zinc metalloproteinase/disintegrin (108 aa).

The Peptidase M12B domain occupies 1 to 19; the sequence is NEYQTYLTDRNPQCILNEP. The propeptide occupies 20–35; that stretch reads LRTDTVSTPVSGNELL. Positions 27–108 constitute a Disintegrin domain; it reads TPVSGNELLE…ADCPRNGFYG (82 aa). Disulfide bonds link C41-C56, C43-C51, C50-C73, C64-C70, C69-C94, and C82-C101. A Cell attachment site; atypical (KGD) motif is present at residues 86–88; the sequence is KGD.

Belongs to the venom metalloproteinase (M12B) family. P-II subfamily. P-IIa sub-subfamily. Monomeric (disintegrin). Requires Zn(2+) as cofactor. Expressed by the venom gland.

It localises to the secreted. Functionally, impairs hemostasis in the envenomed animal. In terms of biological role, inhibits platelet aggregation induced by ADP, thrombin, platelet-activating factor and collagen. Acts by inhibiting fibrinogen interaction with platelet receptors GPIIb/GPIIIa (ITGA2B/ITGB3). This chain is Zinc metalloproteinase/disintegrin, found in Gloydius brevicauda (Korean slamosa snake).